Reading from the N-terminus, the 96-residue chain is Co-chaperonin GroES (96 aa).

This sequence belongs to the GroES chaperonin family. In terms of assembly, heptamer of 7 subunits arranged in a ring. Interacts with the chaperonin GroEL.

Its subcellular location is the cytoplasm. Functionally, together with the chaperonin GroEL, plays an essential role in assisting protein folding. The GroEL-GroES system forms a nano-cage that allows encapsulation of the non-native substrate proteins and provides a physical environment optimized to promote and accelerate protein folding. GroES binds to the apical surface of the GroEL ring, thereby capping the opening of the GroEL channel. The protein is Co-chaperonin GroES of Streptococcus pyogenes serotype M18 (strain MGAS8232).